Here is a 28-residue protein sequence, read N- to C-terminus: trp operon leader peptide (28 aa).

Functionally, this protein is involved in control of the biosynthesis of tryptophan. The sequence is that of trp operon leader peptide (trpL) from Serratia marcescens.